The following is a 130-amino-acid chain: Small ribosomal subunit protein uS9 (130 aa).

Residues 98 to 130 form a disordered region; sequence LKRAGFLTRDARKKERKKYGQPGARKRFQYSKR. The span at 111 to 130 shows a compositional bias: basic residues; the sequence is KERKKYGQPGARKRFQYSKR.

This sequence belongs to the universal ribosomal protein uS9 family.

In Sorangium cellulosum (strain So ce56) (Polyangium cellulosum (strain So ce56)), this protein is Small ribosomal subunit protein uS9.